A 287-amino-acid polypeptide reads, in one-letter code: Nucleotide-binding protein VV0445 (287 aa).

Residue glycine 8–serine 15 participates in ATP binding. Aspartate 56–asparagine 59 serves as a coordination point for GTP.

This sequence belongs to the RapZ-like family.

Displays ATPase and GTPase activities. The polypeptide is Nucleotide-binding protein VV0445 (Vibrio vulnificus (strain YJ016)).